Here is a 660-residue protein sequence, read N- to C-terminus: MLCKRTLSEISSLYTASKKKKTVIDTLSYTYPDVLLSCNERYQITHPELGIVHASNLYCSSLESFCLQYRDYGNDLSIRSCEKLVFSDALITGLSRIKFTPWPECRTRYETTVSELRRLHDMDNFTEASGFLEDLKRWLCSQNVFLEPFQKNCILHVICFLVATRTPHHYHYIFEYIKRLFNIENINTSVLDTFKHKTTVFLVPRRHGKTWILTPIITFLIKNFSNISVGYVAHQKHVSQHVMKEVEILCRREIPYVVENKDNVISVIRTNSRSCALFASCFNTNSIRGQSFNILLVDESNFIKKEALHAIIGFLAQSTAKIIFISSCNTSTQSTSFLAHVKKTPTQILNVISYVCEEHLYSFGERSEAITCPCYRLHKPTFISLNLNIKKTANAFLKDSFNEEILGTTNTSFLANPILTDSSVNEFDMIRYSTVNKQLQEHLADTLFVYVDPAFTTNRRASGTGVAGVGRYNNQFIVYGIEHFYLKSLADTSEDSIGECVAFMISGIIKIHPFFTMVRVLIEGNSSQAASVKIAYCIKAHLSDSACILQFYQTLDQNGFEQPFFLLKKNKRAAVEHFVSKFNSNLIKASQEIISHTIKLNFDPIEYLLLQIKNISQIVTTESVEYTTRKTKDSSDDALVAVIMAIYFCNDQEVALYKCI.

The Walker A motif signature appears at 203-210 (VPRRHGKT). A Walker B motif motif is present at residues 294–299 (ILLVDE). The For ATPase activity role is filled by glutamate 299. Catalysis depends on for nuclease activity residues aspartate 452, glutamate 523, and aspartate 637.

Belongs to the herpesviridae TRM3 protein family. As to quaternary structure, interacts with the terminase subunits TRM1 and TRM2. Interacts with portal protein.

It is found in the host nucleus. Its function is as follows. Component of the molecular motor that translocates viral genomic DNA in empty capsid during DNA packaging. Forms a tripartite terminase complex together with TRM1 and TRM2 in the host cytoplasm. Once the complex reaches the host nucleus, it interacts with the capsid portal vertex. This portal forms a ring in which genomic DNA is translocated into the capsid. TRM3 carries an RNase H-like nuclease activity that plays an important role for the cleavage of concatemeric viral DNA into unit length genomes. The chain is Tripartite terminase subunit 3 from Elephas maximus (Indian elephant).